The following is a 456-amino-acid chain: UDP-N-acetylmuramoylalanine--D-glutamate ligase (456 aa).

Residue 121 to 127 (GTNGKTT) participates in ATP binding.

This sequence belongs to the MurCDEF family.

The protein localises to the cytoplasm. It carries out the reaction UDP-N-acetyl-alpha-D-muramoyl-L-alanine + D-glutamate + ATP = UDP-N-acetyl-alpha-D-muramoyl-L-alanyl-D-glutamate + ADP + phosphate + H(+). It participates in cell wall biogenesis; peptidoglycan biosynthesis. Its function is as follows. Cell wall formation. Catalyzes the addition of glutamate to the nucleotide precursor UDP-N-acetylmuramoyl-L-alanine (UMA). This chain is UDP-N-acetylmuramoylalanine--D-glutamate ligase, found in Desulfotalea psychrophila (strain LSv54 / DSM 12343).